The primary structure comprises 596 residues: Inactive metallocarboxypeptidase ECM14 (596 aa).

A signal peptide spans 1 to 22 (MHFSVRLSLFLTLASSLPLVSA). The propeptide occupies 23–184 (VPQHEDQAYT…QTIYESYPKA (162 aa)). The tract at residues 182-211 (PKAGSASPSQQGPTTRRFSPSASTSKSKPH) is disordered. Over residues 187-207 (ASPSQQGPTTRRFSPSASTSK) the composition is skewed to polar residues. The 327-residue stretch at 220–546 (DYQPLSVLLP…RAMVAMGKFL (327 aa)) folds into the Peptidase M14 domain. Positions 285 and 288 each coordinate Zn(2+). Substrate-binding positions include 285-288 (HARE), Arg-343, and 360-361 (DH). Cys-354 and Cys-377 are oxidised to a cystine. Asn-370 carries an N-linked (GlcNAc...) asparagine glycan. His-417 is a binding site for Zn(2+). 418-419 (SY) serves as a coordination point for substrate. Positions 557 to 596 (DGLRASEEPQDYDNDLEDGEDDKDEQGSTVFRAQADDLQS) are disordered. A compositionally biased stretch (acidic residues) spans 564–580 (EPQDYDNDLEDGEDDKD). Residues 583 to 596 (GSTVFRAQADDLQS) are compositionally biased toward polar residues.

This sequence belongs to the peptidase M14 family. Zn(2+) is required as a cofactor.

It localises to the vacuole. The protein localises to the secreted. In terms of biological role, inactive carboxypeptidase that may play a role in cell wall organization and biogenesis. The chain is Inactive metallocarboxypeptidase ECM14 (ECM14) from Arthroderma benhamiae (strain ATCC MYA-4681 / CBS 112371) (Trichophyton mentagrophytes).